We begin with the raw amino-acid sequence, 361 residues long: Outer mitochondrial transmembrane helix translocase (361 aa).

Topologically, residues 1–15 (MVHAEAFSRPLSRNE) are mitochondrial intermembrane. A helical membrane pass occupies residues 16-32 (VVGLIFRLTIFGAVTYF). Residues 33–361 (TIKWMVDAID…QNVLTHVCLD (329 aa)) are Cytoplasmic-facing. An ATP-binding site is contributed by 133–140 (GPPGCGKT). Ser-322 carries the phosphoserine modification.

This sequence belongs to the AAA ATPase family. MSP1 subfamily. In terms of assembly, interacts with GRIA2 and GRIP1 in an ATP-dependent manner. ATAD1-catalyzed ATP hydrolysis disrupts not only its binding to GRIA2 and GRIP1, but also interaction between GRIP1 and GRIA2, leading to AMPAR complex disassembly.

It is found in the mitochondrion outer membrane. It localises to the peroxisome membrane. The protein localises to the postsynaptic cell membrane. It carries out the reaction [protein]-with a C-terminal TM segment(out) + ATP + H2O = [protein]-with a C-terminal TM segment(in) + ADP + phosphate + H(+). Functionally, outer mitochondrial translocase required to remove mislocalized tail-anchored transmembrane proteins on mitochondria. Specifically recognizes and binds tail-anchored transmembrane proteins: acts as a dislocase that mediates the ATP-dependent extraction of mistargeted tail-anchored transmembrane proteins from the mitochondrion outer membrane. Also plays a critical role in regulating the surface expression of AMPA receptors (AMPAR), thereby regulating synaptic plasticity and learning and memory. Required for NMDA-stimulated AMPAR internalization and inhibition of GRIA1 and GRIA2 recycling back to the plasma membrane; these activities are ATPase-dependent. This is Outer mitochondrial transmembrane helix translocase from Homo sapiens (Human).